We begin with the raw amino-acid sequence, 237 residues long: ATP synthase subunit a (237 aa).

4 helical membrane-spanning segments follow: residues 17 to 37 (LSDM…AVAA), 78 to 98 (LGVT…PFWL), 178 to 198 (ILLG…CGSI), and 201 to 221 (MVIM…AFIF).

It belongs to the ATPase A chain family. As to quaternary structure, F-type ATPases have 2 components, CF(1) - the catalytic core - and CF(0) - the membrane proton channel. CF(1) has five subunits: alpha(3), beta(3), gamma(1), delta(1), epsilon(1). CF(0) has three main subunits: a(1), b(2) and c(9-12). The alpha and beta chains form an alternating ring which encloses part of the gamma chain. CF(1) is attached to CF(0) by a central stalk formed by the gamma and epsilon chains, while a peripheral stalk is formed by the delta and b chains.

It localises to the cell membrane. Key component of the proton channel; it plays a direct role in the translocation of protons across the membrane. In Bacillus caldotenax, this protein is ATP synthase subunit a.